The sequence spans 251 residues: Ditrans,polycis-undecaprenyl-diphosphate synthase ((2E,6E)-farnesyl-diphosphate specific) (251 aa).

The active site involves Asp20. Asp20 provides a ligand contact to Mg(2+). Residues 21–24 (GNGR), Trp25, Arg33, His37, and 65–67 (SSE) each bind substrate. Asn68 functions as the Proton acceptor in the catalytic mechanism. Substrate is bound by residues Trp69, Arg71, Arg188, and 194–196 (RIS). Residue Glu207 coordinates Mg(2+).

The protein belongs to the UPP synthase family. As to quaternary structure, homodimer. Mg(2+) serves as cofactor.

The enzyme catalyses 8 isopentenyl diphosphate + (2E,6E)-farnesyl diphosphate = di-trans,octa-cis-undecaprenyl diphosphate + 8 diphosphate. In terms of biological role, catalyzes the sequential condensation of isopentenyl diphosphate (IPP) with (2E,6E)-farnesyl diphosphate (E,E-FPP) to yield (2Z,6Z,10Z,14Z,18Z,22Z,26Z,30Z,34E,38E)-undecaprenyl diphosphate (di-trans,octa-cis-UPP). UPP is the precursor of glycosyl carrier lipid in the biosynthesis of bacterial cell wall polysaccharide components such as peptidoglycan and lipopolysaccharide. This Vibrio parahaemolyticus serotype O3:K6 (strain RIMD 2210633) protein is Ditrans,polycis-undecaprenyl-diphosphate synthase ((2E,6E)-farnesyl-diphosphate specific).